Consider the following 135-residue polypeptide: Helix-loop-helix protein 2 (135 aa).

Residues 1 to 80 (MMLSPDQAAD…RRRATAKYRS (80 aa)) are disordered. Positions 10 to 21 (DSDHPSSAHSDP) are enriched in basic and acidic residues. The span at 68 to 80 (KRRRRRATAKYRS) shows a compositional bias: basic residues. A bHLH domain is found at 77 to 129 (KYRSAHATRERIRVEAFNLAFAELRKLLPTLPPDKKLSKIEILRLAICYISYL).

In terms of assembly, homodimer. Interacts and may form heterodimers with STAT3.

It localises to the nucleus. Functionally, transcription factor which binds the E box motif 5'-CA[TC][AG]TG-3'. Involved in regulating energy expenditure, body mass, voluntary physical activity, mating behavior and reproductive longevity, acting through the hypothalamic-pituitary-gonadal axis. Acts as a transcriptional activator of target genes, including NDN, PCSK1, MC4R. Is also a transcriptional activator of KISS1. May act centrally to regulate function of both white and brown adipose tissue. Together with NHLH1, required to maintain migration and survival of cells in the anterior extramural migration stream (aes), which forms the precerebellar nuclei. Also, in concert with NHLH1, may determine fate of gonadotropin releasing hormone-1 (GnRH-1) neurons. The sequence is that of Helix-loop-helix protein 2 (NHLH2) from Homo sapiens (Human).